A 278-amino-acid chain; its full sequence is tRNA pseudouridine synthase A (278 aa).

The active-site Nucleophile is D52. Y110 lines the substrate pocket. The tract at residues 259–278 (SKRQNGTTKVEQPSSYVHEE) is disordered. A compositionally biased stretch (polar residues) spans 261 to 278 (RQNGTTKVEQPSSYVHEE).

The protein belongs to the tRNA pseudouridine synthase TruA family. Homodimer.

The catalysed reaction is uridine(38/39/40) in tRNA = pseudouridine(38/39/40) in tRNA. Functionally, formation of pseudouridine at positions 38, 39 and 40 in the anticodon stem and loop of transfer RNAs. The polypeptide is tRNA pseudouridine synthase A (Chloroflexus aurantiacus (strain ATCC 29366 / DSM 635 / J-10-fl)).